Here is a 239-residue protein sequence, read N- to C-terminus: ATP synthase subunit a (239 aa).

5 consecutive transmembrane segments (helical) span residues Ile13–Phe33, Phe75–Val95, Asp113–Met133, Gly174–Gly194, and Trp208–Tyr230.

The protein belongs to the ATPase A chain family. In terms of assembly, F-type ATPases have 2 components, CF(1) - the catalytic core - and CF(0) - the membrane proton channel. CF(1) has five subunits: alpha(3), beta(3), gamma(1), delta(1), epsilon(1). CF(0) has three main subunits: a(1), b(2) and c(9-12). The alpha and beta chains form an alternating ring which encloses part of the gamma chain. CF(1) is attached to CF(0) by a central stalk formed by the gamma and epsilon chains, while a peripheral stalk is formed by the delta and b chains.

Its subcellular location is the cell membrane. In terms of biological role, key component of the proton channel; it plays a direct role in the translocation of protons across the membrane. In Enterococcus faecalis (strain ATCC 700802 / V583), this protein is ATP synthase subunit a.